Consider the following 672-residue polypeptide: Amidase chyE (672 aa).

The active-site Nucleophile is Cys2. Residues 2–219 (CGISAFLCHP…PGHYLISRPN (218 aa)) enclose the Glutamine amidotransferase type-2 domain. Positions 250–639 (VRKRLLEAVK…TQEAVEKAFT (390 aa)) constitute an Asparagine synthetase domain.

Belongs to the asparagine synthetase family.

The protein operates within pigment biosynthesis. Amidase; part of the gene cluster that mediates the biosynthesis of the yellow pigment chrysogine. the NRPS chyA mediates the condensation of anthranilic acid and alanine into the intermediate 2-(2-aminopropanamido)benzoic acid. The remainder of the pathway is highly branched yielding at least 13 chrysogine-related compounds. The malonyl transferase chyE converts 2-(2-aminopropanamido)benzoic acid and 2-(2-aminopropanamido)benzamidine into 2-(2-(2-carboxyacetamido)propanamido)benzoic acid and 3-((1-((2-carbamoylphenyl)amino)-1-oxopropan-2-yl)amino)-3-oxopropanoic acid, respectively. ChyD is an amidase, being responsible for the amidation of the carboxylic acid moiety of 2-(2-aminopropanamido)benzoic acid, 2-(2-(2-carboxyacetamido)propanamido)benzoic acid and 2-(2-((4-amino-1-carboxy-4-oxobutyl)amino)propanamido)benzoic acid. ChyC is involved in the same reactions as ChyD, but plays a more minor role in the amidation reactions compared to chyD. The oxidoreductases chyH and chyM are involved in oxidation reactions that form N-pyruvoylanthranilamide from 2-(2-aminopropanamido)benzamidine and (1-((2-carbamoylphenyl)amino)-1-oxopropan-2-yl)glutamine, respectively. N-pyruvoylanthranilamide is further converted via two further branches in the pathway, yielding chrysogine and additional chrysogine-related coumpounds. Chrysogine is likely formed by a spontaneous ring closure from N-pyruvoylanthranilamide. The protein is Amidase chyE of Penicillium rubens (strain ATCC 28089 / DSM 1075 / NRRL 1951 / Wisconsin 54-1255) (Penicillium chrysogenum).